Consider the following 127-residue polypeptide: Holo-[acyl-carrier-protein] synthase (127 aa).

2 residues coordinate Mg(2+): Asp9 and Glu58.

This sequence belongs to the P-Pant transferase superfamily. AcpS family. The cofactor is Mg(2+).

Its subcellular location is the cytoplasm. It catalyses the reaction apo-[ACP] + CoA = holo-[ACP] + adenosine 3',5'-bisphosphate + H(+). Its function is as follows. Transfers the 4'-phosphopantetheine moiety from coenzyme A to a Ser of acyl-carrier-protein. This Shewanella putrefaciens (strain CN-32 / ATCC BAA-453) protein is Holo-[acyl-carrier-protein] synthase.